A 266-amino-acid polypeptide reads, in one-letter code: GTP cyclohydrolase FolE2 (266 aa).

The protein belongs to the GTP cyclohydrolase IV family.

The catalysed reaction is GTP + H2O = 7,8-dihydroneopterin 3'-triphosphate + formate + H(+). The protein operates within cofactor biosynthesis; 7,8-dihydroneopterin triphosphate biosynthesis; 7,8-dihydroneopterin triphosphate from GTP: step 1/1. Its function is as follows. Converts GTP to 7,8-dihydroneopterin triphosphate. The chain is GTP cyclohydrolase FolE2 from Syntrophotalea carbinolica (strain DSM 2380 / NBRC 103641 / GraBd1) (Pelobacter carbinolicus).